Consider the following 797-residue polypeptide: Protocadherin beta-11 (797 aa).

The first 26 residues, 1 to 26 (MENQGTRTQQIRQVLLLFVLLGMSQA), serve as a signal peptide directing secretion. Residues 27–690 (GSETWSFSVA…AQADSLTVYL (664 aa)) lie on the Extracellular side of the membrane. Cadherin domains lie at 35 to 133 (VAEE…SPIF), 138 to 242 (MLLE…SPEF), 247 to 347 (YEVK…APEI), 352 to 451 (ITSP…APTF), and 456 to 561 (YTLF…SPFV). N-linked (GlcNAc...) asparagine glycosylation is found at Asn418, Asn436, Asn487, and Asn567. In terms of domain architecture, Cadherin 6 spans 568–671 (GSAPCTELVP…LVDGFSQPYL (104 aa)). A helical membrane pass occupies residues 691 to 711 (VVALASVSSLFLFSVLLFVAV). The Cytoplasmic portion of the chain corresponds to 712–797 (RLCRRSRAAS…TFRNSFGFNF (86 aa)).

Its subcellular location is the cell membrane. In terms of biological role, potential calcium-dependent cell-adhesion protein. May be involved in the establishment and maintenance of specific neuronal connections in the brain. The polypeptide is Protocadherin beta-11 (PCDHB11) (Homo sapiens (Human)).